The following is a 212-amino-acid chain: Ribonuclease HII (212 aa).

An RNase H type-2 domain is found at 1-204 (MRVGIDEAGR…LRSTAPLYYI (204 aa)). Positions 6, 7, and 103 each coordinate a divalent metal cation.

Belongs to the RNase HII family. Mn(2+) serves as cofactor. Requires Mg(2+) as cofactor.

It localises to the cytoplasm. The catalysed reaction is Endonucleolytic cleavage to 5'-phosphomonoester.. Functionally, endonuclease that specifically degrades the RNA of RNA-DNA hybrids. In Saccharolobus solfataricus (strain ATCC 35092 / DSM 1617 / JCM 11322 / P2) (Sulfolobus solfataricus), this protein is Ribonuclease HII.